An 813-amino-acid polypeptide reads, in one-letter code: Putative ATPase, plasma membrane-like (813 aa).

Residues 1–66 lie on the Cytoplasmic side of the membrane; the sequence is MATGDSLEDI…KKKEHITLRF (66 aa). The helical transmembrane segment at 67 to 86 threads the bilayer; sequence FALMFKPLSWVIQAAAIMAM. The Extracellular portion of the chain corresponds to 87 to 94; it reads LFANGDGR. The helical transmembrane segment at 95-115 threads the bilayer; that stretch reads QLFLGIVCLLIVNTIICYLKE. Residues 116–245 lie on the Cytoplasmic side of the membrane; that stretch reads DDAANVVAMA…GHFRKVVTEI (130 aa). Residues 246–266 form a helical membrane-spanning segment; sequence ENLCVISIAIGISIEVIVMYW. Residues 267 to 275 lie on the Extracellular side of the membrane; the sequence is IQRRNFSDV. The chain crosses the membrane as a helical span at residues 276–293; the sequence is INNLLVLVIGGIPLAMPT. Over 294–555 the chain is Cytoplasmic; the sequence is VLYVIMVTGS…ASRAILQQMK (262 aa). The 4-aspartylphosphate intermediate role is filled by Asp-331. Residues Asp-500 and Asp-504 each coordinate Mg(2+). The chain crosses the membrane as a helical span at residues 556–577; sequence HYTIYAVSITIRVVFGFMFIAL. The Extracellular segment spans residues 578–582; the sequence is IWKFD. A helical membrane pass occupies residues 583-605; sequence FSPFMVLAIALLNEETTKAITMD. At 606–622 the chain is on the cytoplasmic side; it reads NVTNPSPTPDSLKLKEI. A helical membrane pass occupies residues 623 to 643; the sequence is FATGVVYGSYMALITVVFFWA. Residues 644-664 lie on the Extracellular side of the membrane; that stretch reads AYRTDIFPRTFHVRDLRGNEA. Residues 665-685 traverse the membrane as a helical segment; sequence EMMCALYLQVSIMSQALFFVI. Residues 686 to 697 are Cytoplasmic-facing; that stretch reads QSRSWFFVERPG. The helical transmembrane segment at 698–718 threads the bilayer; it reads ELLFLSFVTVQTIATTLAVYA. The Extracellular portion of the chain corresponds to 719 to 726; sequence SWETARIE. Residues 727–747 traverse the membrane as a helical segment; it reads GIGWSWAGVIWLYNIIFFFPL. At 748–813 the chain is on the cytoplasmic side; it reads DIMKFGIRYI…SQDLRGVGWV (66 aa). Ser-776 bears the Phosphoserine mark.

The protein belongs to the cation transport ATPase (P-type) (TC 3.A.3) family. Type IIIA subfamily.

Its subcellular location is the membrane. This Arabidopsis thaliana (Mouse-ear cress) protein is Putative ATPase, plasma membrane-like.